The primary structure comprises 397 residues: Serpin-Z7 (397 aa).

Alanine 2 is modified (N-acetylalanine). An RCL region spans residues 344-368 (GTKAGAATGDVIVDRSLPIRMDFVA).

Belongs to the serpin family. Highly expressed in endosperm, at intermediate level in embryo and at lower levels in roots.

In terms of biological role, inhibits chymotrypsin in vitro. This is Serpin-Z7 (PAZ7) from Hordeum vulgare (Barley).